A 950-amino-acid chain; its full sequence is Glycine dehydrogenase (decarboxylating) (950 aa).

Lys-698 is subject to N6-(pyridoxal phosphate)lysine.

It belongs to the GcvP family. In terms of assembly, the glycine cleavage system is composed of four proteins: P, T, L and H. Pyridoxal 5'-phosphate is required as a cofactor.

It carries out the reaction N(6)-[(R)-lipoyl]-L-lysyl-[glycine-cleavage complex H protein] + glycine + H(+) = N(6)-[(R)-S(8)-aminomethyldihydrolipoyl]-L-lysyl-[glycine-cleavage complex H protein] + CO2. Functionally, the glycine cleavage system catalyzes the degradation of glycine. The P protein binds the alpha-amino group of glycine through its pyridoxal phosphate cofactor; CO(2) is released and the remaining methylamine moiety is then transferred to the lipoamide cofactor of the H protein. This is Glycine dehydrogenase (decarboxylating) from Neisseria gonorrhoeae (strain NCCP11945).